The chain runs to 128 residues: MSEKINQIVEELKTLTLLEASELVAAIEETFGVDASASTGGGVVMAVAPAAAEEVEEKTEFTVMLDEVPADKKIAVLKVVRTLTGLGLKEAKELVESTPKMVQEGLGKDAAEDAKKQIEDAGGKVSLT.

Residues 103–128 (QEGLGKDAAEDAKKQIEDAGGKVSLT) form a disordered region. Residues 106 to 122 (LGKDAAEDAKKQIEDAG) are compositionally biased toward basic and acidic residues.

This sequence belongs to the bacterial ribosomal protein bL12 family. In terms of assembly, homodimer. Part of the ribosomal stalk of the 50S ribosomal subunit. Forms a multimeric L10(L12)X complex, where L10 forms an elongated spine to which 2 to 4 L12 dimers bind in a sequential fashion. Binds GTP-bound translation factors.

It localises to the plastid. The protein resides in the chloroplast. Forms part of the ribosomal stalk which helps the ribosome interact with GTP-bound translation factors. Is thus essential for accurate translation. The chain is Large ribosomal subunit protein bL12c from Thalassiosira pseudonana (Marine diatom).